The primary structure comprises 852 residues: Alanine--tRNA ligase (852 aa).

The Zn(2+) site is built by His-554, His-558, Cys-656, and His-660.

The protein belongs to the class-II aminoacyl-tRNA synthetase family. Zn(2+) is required as a cofactor.

It is found in the cytoplasm. It carries out the reaction tRNA(Ala) + L-alanine + ATP = L-alanyl-tRNA(Ala) + AMP + diphosphate. Its function is as follows. Catalyzes the attachment of alanine to tRNA(Ala) in a two-step reaction: alanine is first activated by ATP to form Ala-AMP and then transferred to the acceptor end of tRNA(Ala). Also edits incorrectly charged Ser-tRNA(Ala) and Gly-tRNA(Ala) via its editing domain. This is Alanine--tRNA ligase from Campylobacter concisus (strain 13826).